A 69-amino-acid chain; its full sequence is DNA-directed RNA polymerase subunit epsilon (69 aa).

Belongs to the RNA polymerase subunit epsilon family. RNAP is composed of a core of 2 alpha, a beta and a beta' subunit. The core is associated with a delta subunit, and at least one of epsilon or omega. When a sigma factor is associated with the core the holoenzyme is formed, which can initiate transcription.

It catalyses the reaction RNA(n) + a ribonucleoside 5'-triphosphate = RNA(n+1) + diphosphate. Its function is as follows. A non-essential component of RNA polymerase (RNAP). This is DNA-directed RNA polymerase subunit epsilon from Bacillus velezensis (strain DSM 23117 / BGSC 10A6 / LMG 26770 / FZB42) (Bacillus amyloliquefaciens subsp. plantarum).